The sequence spans 434 residues: Nicotinate phosphoribosyltransferase (434 aa).

His-242 carries the post-translational modification Phosphohistidine; by autocatalysis.

Belongs to the NAPRTase family. Transiently phosphorylated on a His residue during the reaction cycle. Phosphorylation strongly increases the affinity for substrates and increases the rate of nicotinate D-ribonucleotide production. Dephosphorylation regenerates the low-affinity form of the enzyme, leading to product release.

The catalysed reaction is nicotinate + 5-phospho-alpha-D-ribose 1-diphosphate + ATP + H2O = nicotinate beta-D-ribonucleotide + ADP + phosphate + diphosphate. It functions in the pathway cofactor biosynthesis; NAD(+) biosynthesis; nicotinate D-ribonucleotide from nicotinate: step 1/1. Functionally, catalyzes the synthesis of beta-nicotinate D-ribonucleotide from nicotinate and 5-phospho-D-ribose 1-phosphate at the expense of ATP. The polypeptide is Nicotinate phosphoribosyltransferase (Rhizobium leguminosarum bv. trifolii (strain WSM2304)).